The following is a 303-amino-acid chain: Short chain dehydrogenase pigC (303 aa).

NADP(+)-binding residues include isoleucine 45, aspartate 103, asparagine 130, arginine 164, tyrosine 196, lysine 200, and threonine 231. Residue tyrosine 196 is the Proton donor of the active site. Lysine 200 functions as the Lowers pKa of active site Tyr in the catalytic mechanism.

The protein belongs to the short-chain dehydrogenases/reductases (SDR) family.

It participates in secondary metabolite biosynthesis. In terms of biological role, short chain dehydrogenase; part of the gene cluster that mediates the biosynthesis of azaphilone pigments (MonAzPs), a complex mixture of compounds with a common azaphilone skeleton very widely used as food colorants. Within the pathway, pigC intercepts the very reactive benzaldehyde produced by the nrPKS pigA to reduce the omega-1 carbonyl to the alcohol to provide the first stable enzyme-free MonAzPs intermediate, 6-(4-hydroxy-2-oxopentyl)-3-methyl-2,4-dioxocyclohexane carbaldehyde, also known as M7PKS-1. The first step of the pathway is performed by the nrPKS pigA that forms the hexaketide precursor from successive condensations of five malonyl-CoA units, with a simple acetyl-CoA starter unit. The role of esterase pigG is not clear, but it may play at most a supplementary role in the formation of the benzaldehyde produced by the pigA nrPKS. This very reactive benzaldehyde is intercepted by the pigC ketoreductase that to provide the first stable enzyme-free MonAzPs intermediate, M7PKS-1. The FAD-dependent monooxygenase pigN hydroxylates M7PKS-1 at C-4, which triggers the formation of the pyran ring. PigJ, pigK and pigD are involved in the acetylation of the pyran ring. PigJ and pigK form the two subunits of a dedicated fungal FAS that produces the side chain fatty acyl moiety of MonAzPs and pigD transfers the fatty acyl chain to the C-4 alcohol. PigM and pigO are involved in the elimination of the omega-1 alcohol. PigM acts as an O-acetyltransferase that synthesizes the putative O-11 acetyl intermediate whereas pigO eliminates acetic acid to yield an intermediate with a C10(11) double bond. The dehydration of the C-11 alcohol followed by the reduction of the C6(7) double bond by the NAD(P)H-dependent oxidoreductase pigE increases the electrophilicity of the C-5 ketone of the resulting acyl benzopyran. This in turn sets up the C-5 ketone for an intramolecular Knoevenagel aldol condensation with the C-20 enol of the side chain. This condensation affords the characteristic linear tricyclic carbon skeletons of the yellow pigments that serve as the common precursors for the classical yellow pigments monascin and ankaflavin, orange pigments rubopunctatin and monascorubrin, and red pigments ribropunctamine and monascorubramine. The FAD-dependent oxidoreductase pigF is especially invoved in the biosynthesis of orange and red pigments via desaturation of C6(7). In Monascus ruber (Mold), this protein is Short chain dehydrogenase pigC.